The sequence spans 232 residues: Ribonuclease 3 (232 aa).

In terms of domain architecture, RNase III spans 6–133 (FNDIENRLGV…VIAAVYLDKG (128 aa)). A Mg(2+)-binding site is contributed by Glu-46. Asp-50 is a catalytic residue. Asp-119 and Glu-122 together coordinate Mg(2+). Glu-122 is a catalytic residue. A DRBM domain is found at 160–229 (DFKTKLQELL…AKEALKRLEK (70 aa)).

The protein belongs to the ribonuclease III family. As to quaternary structure, homodimer. The cofactor is Mg(2+).

The protein localises to the cytoplasm. The catalysed reaction is Endonucleolytic cleavage to 5'-phosphomonoester.. In terms of biological role, digests double-stranded RNA. Involved in the processing of primary rRNA transcript to yield the immediate precursors to the large and small rRNAs (23S and 16S). Processes some mRNAs, and tRNAs when they are encoded in the rRNA operon. Processes pre-crRNA and tracrRNA of type II CRISPR loci if present in the organism. The protein is Ribonuclease 3 of Clostridium botulinum (strain Alaska E43 / Type E3).